Reading from the N-terminus, the 516-residue chain is UDP-N-acetylmuramyl-tripeptide synthetase (516 aa).

Residue Ser-38 coordinates UDP-N-acetyl-alpha-D-muramoyl-L-alanyl-D-glutamate. 116 to 122 (GTKGKTT) is a binding site for ATP. UDP-N-acetyl-alpha-D-muramoyl-L-alanyl-D-glutamate-binding positions include 162–163 (TT), Ser-189, and Arg-197. Lys-231 is subject to N6-carboxylysine.

Belongs to the MurCDEF family. MurE subfamily. Carboxylation is probably crucial for Mg(2+) binding and, consequently, for the gamma-phosphate positioning of ATP.

It is found in the cytoplasm. It participates in cell wall biogenesis; peptidoglycan biosynthesis. Its function is as follows. Catalyzes the addition of an amino acid to the nucleotide precursor UDP-N-acetylmuramoyl-L-alanyl-D-glutamate (UMAG) in the biosynthesis of bacterial cell-wall peptidoglycan. This is UDP-N-acetylmuramyl-tripeptide synthetase from Lactobacillus delbrueckii subsp. bulgaricus (strain ATCC 11842 / DSM 20081 / BCRC 10696 / JCM 1002 / NBRC 13953 / NCIMB 11778 / NCTC 12712 / WDCM 00102 / Lb 14).